Here is a 30-residue protein sequence, read N- to C-terminus: Cyclotide psyleio E (30 aa).

Positions 1–30 form a cross-link, cyclopeptide (Ser-Lys); the sequence is SVTPIVCGETCFGGTCNTPGCSCSWPICTK. Cystine bridges form between C7-C21, C11-C23, and C16-C28.

In terms of processing, this is a cyclic peptide.

In terms of biological role, probably participates in a plant defense mechanism. In Psychotria leiocarpa, this protein is Cyclotide psyleio E.